Here is a 153-residue protein sequence, read N- to C-terminus: Ubiquitin/ISG15-conjugating enzyme E2 L6 (153 aa).

In terms of domain architecture, UBC core spans 2–149; it reads MASMRVVKEL…AEEFTLRFGV (148 aa). Catalysis depends on Cys-86, which acts as the Glycyl thioester intermediate.

The protein belongs to the ubiquitin-conjugating enzyme family. Interacts with RNF19A, RNF19B and RNF144B. Interacts with FLT3 (tyrosine phosphorylated). Post-translationally, ISGylated. As to expression, present in natural killer cells (at protein level).

It catalyses the reaction S-ubiquitinyl-[E1 ubiquitin-activating enzyme]-L-cysteine + [E2 ubiquitin-conjugating enzyme]-L-cysteine = [E1 ubiquitin-activating enzyme]-L-cysteine + S-ubiquitinyl-[E2 ubiquitin-conjugating enzyme]-L-cysteine.. It functions in the pathway protein modification; protein ubiquitination. Its function is as follows. Catalyzes the covalent attachment of ubiquitin or ISG15 to other proteins. Functions in the E6/E6-AP-induced ubiquitination of p53/TP53. Promotes ubiquitination and subsequent proteasomal degradation of FLT3. The chain is Ubiquitin/ISG15-conjugating enzyme E2 L6 (UBE2L6) from Homo sapiens (Human).